Consider the following 238-residue polypeptide: Monocyte to macrophage differentiation factor (238 aa).

The Cytoplasmic segment spans residues 1–28; the sequence is MQFRNRFQRFMNHRAPANGRYKPTCYEH. Residues 29–49 form a helical membrane-spanning segment; that stretch reads AANCYTHAFLIVPAIVGSALL. Over 50 to 61 the chain is Lumenal; sequence HRLSDDCWEKIT. Residues 62–82 form a helical membrane-spanning segment; it reads AWIYGMGLCALFIVSTVFHIV. Topologically, residues 83-101 are cytoplasmic; the sequence is SWKKSHLRTVEHCFHMCDR. A helical membrane pass occupies residues 102–122; the sequence is MVIYFFIAASYAPWLNLRELG. P123 is a topological domain (lumenal). A helical transmembrane segment spans residues 124 to 144; the sequence is LASHMRWFIWLMAAGGTIYVF. The Cytoplasmic portion of the chain corresponds to 145–151; that stretch reads LYHEKYK. The helical transmembrane segment at 152-172 threads the bilayer; it reads VVELFFYLTMGFSPALVVTSM. Residues 173-174 are Lumenal-facing; that stretch reads NN. A helical transmembrane segment spans residues 175 to 195; that stretch reads TDGLQELACGGLIYCLGVVFF. Residues 196–198 lie on the Cytoplasmic side of the membrane; the sequence is KSD. The helical transmembrane segment at 199–219 threads the bilayer; it reads GIIPFAHAIWHLFVATAAAVH. The Lumenal segment spans residues 220 to 238; the sequence is YYAIWKYLYRSPTDFIRHL.

It belongs to the ADIPOR family. Preferentially expressed in the brain.

It localises to the late endosome membrane. Its subcellular location is the lysosome membrane. In terms of biological role, is involved in the dynamics of lysosomal membranes associated with microglial activation following brain lesion. The protein is Monocyte to macrophage differentiation factor of Rattus norvegicus (Rat).